The chain runs to 251 residues: UPF0246 protein PEPE_1842 (251 aa).

This sequence belongs to the UPF0246 family.

This chain is UPF0246 protein PEPE_1842, found in Pediococcus pentosaceus (strain ATCC 25745 / CCUG 21536 / LMG 10740 / 183-1w).